The primary structure comprises 309 residues: tRNA dimethylallyltransferase (309 aa).

13–20 (GPTGAGKT) is a binding site for ATP. 15-20 (TGAGKT) is a substrate binding site. Interaction with substrate tRNA stretches follow at residues 38 to 41 (DSRQ) and 162 to 166 (QRVTR).

The protein belongs to the IPP transferase family. In terms of assembly, monomer. Mg(2+) is required as a cofactor.

It carries out the reaction adenosine(37) in tRNA + dimethylallyl diphosphate = N(6)-dimethylallyladenosine(37) in tRNA + diphosphate. Functionally, catalyzes the transfer of a dimethylallyl group onto the adenine at position 37 in tRNAs that read codons beginning with uridine, leading to the formation of N6-(dimethylallyl)adenosine (i(6)A). In Nitratidesulfovibrio vulgaris (strain ATCC 29579 / DSM 644 / CCUG 34227 / NCIMB 8303 / VKM B-1760 / Hildenborough) (Desulfovibrio vulgaris), this protein is tRNA dimethylallyltransferase.